A 587-amino-acid chain; its full sequence is 5-aminolevulinate synthase, erythroid-specific, mitochondrial (587 aa).

The N-terminal 49 residues, 1 to 49, are a transit peptide targeting the mitochondrion; sequence MVAAAMLLRSCPVLSQGPTGLLGKVAKTYQFLFSIGRCPILATQGPTCS. A succinyl-CoA-binding site is contributed by R163. The pyridoxal 5'-phosphate site is built by C258 and F259. Positions 280 and 299 each coordinate succinyl-CoA. The pyridoxal 5'-phosphate site is built by S332, H360, and T388. Residue K391 is part of the active site. The residue at position 391 (K391) is an N6-(pyridoxal phosphate)lysine. Positions 420 and 421 each coordinate pyridoxal 5'-phosphate. Position 508 (T508) interacts with succinyl-CoA.

Belongs to the class-II pyridoxal-phosphate-dependent aminotransferase family. As to quaternary structure, homodimer. Interacts with SUCLA2. The cofactor is pyridoxal 5'-phosphate. As to expression, predomnantly expressed in erythroid cells.

It localises to the mitochondrion inner membrane. Its subcellular location is the mitochondrion. It carries out the reaction succinyl-CoA + glycine + H(+) = 5-aminolevulinate + CO2 + CoA. The protein operates within porphyrin-containing compound metabolism; protoporphyrin-IX biosynthesis; 5-aminolevulinate from glycine: step 1/1. Functionally, catalyzes the pyridoxal 5'-phosphate (PLP)-dependent condensation of succinyl-CoA and glycine to form aminolevulinic acid (ALA), with CoA and CO2 as by-products. Contributes significantly to heme formation during erythropoiesis. The polypeptide is 5-aminolevulinate synthase, erythroid-specific, mitochondrial (Alas2) (Mus musculus (Mouse)).